We begin with the raw amino-acid sequence, 821 residues long: LPS-assembly protein LptD (821 aa).

An N-terminal signal peptide occupies residues 1–20; the sequence is MGKRLFWTALSGLMVSAAHA.

It belongs to the LptD family. Component of the lipopolysaccharide transport and assembly complex. Interacts with LptE and LptA.

It is found in the cell outer membrane. Functionally, together with LptE, is involved in the assembly of lipopolysaccharide (LPS) at the surface of the outer membrane. This Chromohalobacter salexigens (strain ATCC BAA-138 / DSM 3043 / CIP 106854 / NCIMB 13768 / 1H11) protein is LPS-assembly protein LptD.